Reading from the N-terminus, the 446-residue chain is Serine decarboxylase 3 (446 aa).

Histidine 162 serves as a coordination point for substrate. Lysine 274 is modified (N6-(pyridoxal phosphate)lysine).

Belongs to the group II decarboxylase family. The cofactor is pyridoxal 5'-phosphate.

It catalyses the reaction L-serine + H(+) = ethanolamine + CO2. In terms of biological role, catalyzes the biosynthesis of ethanolamine from serine. Decarboxylation of free serine is the major source of ethanolamine production in plants and ethanolamine metabolism is crucial for the synthesis of choline, phosphatidylethanolamine (PE) and phosphatidylcholine (PC), and thus for plant growth. In Oryza sativa subsp. japonica (Rice), this protein is Serine decarboxylase 3.